Consider the following 410-residue polypeptide: Multifunctional CCA protein (410 aa).

Positions 8 and 11 each coordinate ATP. G8 and R11 together coordinate CTP. The Mg(2+) site is built by E21 and D23. Residues R91, R137, and R140 each contribute to the ATP site. Residues R91, R137, and R140 each contribute to the CTP site. Residues 228–329 (TGVHVLSVLR…LELLQRFDVF (102 aa)) form the HD domain.

This sequence belongs to the tRNA nucleotidyltransferase/poly(A) polymerase family. Bacterial CCA-adding enzyme type 1 subfamily. Monomer. Can also form homodimers and oligomers. The cofactor is Mg(2+). Ni(2+) serves as cofactor.

It carries out the reaction a tRNA precursor + 2 CTP + ATP = a tRNA with a 3' CCA end + 3 diphosphate. It catalyses the reaction a tRNA with a 3' CCA end + 2 CTP + ATP = a tRNA with a 3' CCACCA end + 3 diphosphate. In terms of biological role, catalyzes the addition and repair of the essential 3'-terminal CCA sequence in tRNAs without using a nucleic acid template. Adds these three nucleotides in the order of C, C, and A to the tRNA nucleotide-73, using CTP and ATP as substrates and producing inorganic pyrophosphate. tRNA 3'-terminal CCA addition is required both for tRNA processing and repair. Also involved in tRNA surveillance by mediating tandem CCA addition to generate a CCACCA at the 3' terminus of unstable tRNAs. While stable tRNAs receive only 3'-terminal CCA, unstable tRNAs are marked with CCACCA and rapidly degraded. This Ectopseudomonas mendocina (strain ymp) (Pseudomonas mendocina) protein is Multifunctional CCA protein.